The sequence spans 856 residues: Envelope glycoprotein gp160 (856 aa).

Residues 1-31 (MRVKGIRRNCQHLWIWGTMLFGMWMICSAVE) form the signal peptide. Residues 32-684 (QLWVTVYYGV…ITNWLWYIKI (653 aa)) lie on the Extracellular side of the membrane. C53 and C73 are disulfide-bonded. N87, N134, N140, N151, N155, N183, N197, N234, N241, N262, N276, N289, and N295 each carry an N-linked (GlcNAc...) asparagine; by host glycan. Intrachain disulfides connect C118/C205, C125/C196, C130/C152, C218/C247, and C228/C239. Residues 130 to 151 (CIDKNITDWENKTIIGGGEVKN) form a V1 region. A V2 region spans residues 152–196 (CSFNITTSIRDKVHKEYALFYKLDVVPIKSNNDSSTYTRYRLIHC). The segment at 296 to 329 (CTRPNNNVRRRHIHIGPGRAFYTGEIRGNIRQAH) is V3. A disulfide bridge links C296 with C330. N-linked (GlcNAc...) asparagine; by host glycans are attached at residues N331, N338, N354, and N360. The interval 362-372 (SSGGDPEIVTH) is CD4-binding loop. Cystine bridges form between C376–C444 and C383–C417. Residues 383 to 417 (CDSTQLFNSTWNVTGISTEGNNNTEENGDTITLPC) form a V4 region. Residues N390, N394, N404, N447, and N459 are each glycosylated (N-linked (GlcNAc...) asparagine; by host). V5 regions lie at residues 460–470 (SSSREEIFRPG) and 462–470 (SREEIFRPG). Residues 511–532 (AVGAIGAMFLGFLGAAGSTMGA) are fusion peptide. An immunosuppression region spans residues 574 to 592 (KQLQARVLAVERYLRDQQL). C598 and C604 are oxidised to a cystine. 4 N-linked (GlcNAc...) asparagine; by host glycosylation sites follow: N611, N616, N625, and N637. Residues 633–667 (REIDNYTSLIYNLIEESQNQQEKNEQELLELDKWA) adopt a coiled-coil conformation. The segment at 662-683 (ELDKWASLWNWFSITNWLWYIK) is MPER; binding to GalCer. Residues 685–705 (FIMIVGGLVGLRIVFSVLSIV) traverse the membrane as a helical segment. Topologically, residues 706–856 (NRVRQGYSPL…IRQGLERALL (151 aa)) are cytoplasmic. Residues 712 to 715 (YSPL) carry the YXXL motif; contains endocytosis signal motif. Residues 716–742 (SFQTHLPTPRGPDRPEGTEEEGGERDR) form a disordered region. Residues C764 and C837 are each lipidated (S-palmitoyl cysteine; by host). A Di-leucine internalization motif motif is present at residues 855-856 (LL).

The protein belongs to the HIV-1 env protein family. As to quaternary structure, the mature envelope protein (Env) consists of a homotrimer of non-covalently associated gp120-gp41 heterodimers. The resulting complex protrudes from the virus surface as a spike. There seems to be as few as 10 spikes on the average virion. Interacts with host CD4, CCR5 and CXCR4. Gp120 also interacts with the C-type lectins CD209/DC-SIGN and CLEC4M/DC-SIGNR (collectively referred to as DC-SIGN(R)). Gp120 and gp41 interact with GalCer. Gp120 interacts with host ITGA4/ITGB7 complex; on CD4+ T-cells, this interaction results in rapid activation of integrin ITGAL/LFA-1, which facilitates efficient cell-to-cell spreading of HIV-1. Gp120 interacts with cell-associated heparan sulfate; this interaction increases virus infectivity on permissive cells and may be involved in infection of CD4- cells. In terms of assembly, the mature envelope protein (Env) consists of a homotrimer of non-covalently associated gp120-gp41 heterodimers. The resulting complex protrudes from the virus surface as a spike. There seems to be as few as 10 spikes on the average virion. Post-translationally, highly glycosylated by host. The high number of glycan on the protein is reffered to as 'glycan shield' because it contributes to hide protein sequence from adaptive immune system. In terms of processing, palmitoylation of the transmembrane protein and of Env polyprotein (prior to its proteolytic cleavage) is essential for their association with host cell membrane lipid rafts. Palmitoylation is therefore required for envelope trafficking to classical lipid rafts, but not for viral replication. Specific enzymatic cleavages in vivo yield mature proteins. Envelope glycoproteins are synthesized as an inactive precursor that is heavily N-glycosylated and processed likely by host cell furin in the Golgi to yield the mature SU and TM proteins. The cleavage site between SU and TM requires the minimal sequence [KR]-X-[KR]-R. About 2 of the 9 disulfide bonds of gp41 are reduced by P4HB/PDI, following binding to CD4 receptor.

It is found in the virion membrane. Its subcellular location is the host cell membrane. The protein localises to the host endosome membrane. Functionally, oligomerizes in the host endoplasmic reticulum into predominantly trimers. In a second time, gp160 transits in the host Golgi, where glycosylation is completed. The precursor is then proteolytically cleaved in the trans-Golgi and thereby activated by cellular furin or furin-like proteases to produce gp120 and gp41. Attaches the virus to the host lymphoid cell by binding to the primary receptor CD4. This interaction induces a structural rearrangement creating a high affinity binding site for a chemokine coreceptor like CXCR4 and/or CCR5. Acts as a ligand for CD209/DC-SIGN and CLEC4M/DC-SIGNR, which are respectively found on dendritic cells (DCs), and on endothelial cells of liver sinusoids and lymph node sinuses. These interactions allow capture of viral particles at mucosal surfaces by these cells and subsequent transmission to permissive cells. HIV subverts the migration properties of dendritic cells to gain access to CD4+ T-cells in lymph nodes. Virus transmission to permissive T-cells occurs either in trans (without DCs infection, through viral capture and transmission), or in cis (following DCs productive infection, through the usual CD4-gp120 interaction), thereby inducing a robust infection. In trans infection, bound virions remain infectious over days and it is proposed that they are not degraded, but protected in non-lysosomal acidic organelles within the DCs close to the cell membrane thus contributing to the viral infectious potential during DCs' migration from the periphery to the lymphoid tissues. On arrival at lymphoid tissues, intact virions recycle back to DCs' cell surface allowing virus transmission to CD4+ T-cells. Its function is as follows. Acts as a class I viral fusion protein. Under the current model, the protein has at least 3 conformational states: pre-fusion native state, pre-hairpin intermediate state, and post-fusion hairpin state. During fusion of viral and target intracellular membranes, the coiled coil regions (heptad repeats) assume a trimer-of-hairpins structure, positioning the fusion peptide in close proximity to the C-terminal region of the ectodomain. The formation of this structure appears to drive apposition and subsequent fusion of viral and target cell membranes. Complete fusion occurs in host cell endosomes and is dynamin-dependent, however some lipid transfer might occur at the plasma membrane. The virus undergoes clathrin-dependent internalization long before endosomal fusion, thus minimizing the surface exposure of conserved viral epitopes during fusion and reducing the efficacy of inhibitors targeting these epitopes. Membranes fusion leads to delivery of the nucleocapsid into the cytoplasm. This chain is Envelope glycoprotein gp160, found in Homo sapiens (Human).